Reading from the N-terminus, the 208-residue chain is Uracil phosphoribosyltransferase (208 aa).

5-phospho-alpha-D-ribose 1-diphosphate-binding positions include Arg78, Arg103, and 130–138 (DPMLATGGS). Residues Ile193 and 198-200 (GDA) contribute to the uracil site. A 5-phospho-alpha-D-ribose 1-diphosphate-binding site is contributed by Asp199.

Belongs to the UPRTase family. It depends on Mg(2+) as a cofactor.

It catalyses the reaction UMP + diphosphate = 5-phospho-alpha-D-ribose 1-diphosphate + uracil. It participates in pyrimidine metabolism; UMP biosynthesis via salvage pathway; UMP from uracil: step 1/1. Allosterically activated by GTP. In terms of biological role, catalyzes the conversion of uracil and 5-phospho-alpha-D-ribose 1-diphosphate (PRPP) to UMP and diphosphate. The chain is Uracil phosphoribosyltransferase from Blochmanniella pennsylvanica (strain BPEN).